Consider the following 994-residue polypeptide: Protein translocase subunit SecA (994 aa).

Residues glutamine 85, glycine 103–threonine 107, and aspartate 492 contribute to the ATP site. Residues isoleucine 868–glutamine 888 show a composition bias toward low complexity. Positions isoleucine 868–glutamate 994 are disordered. Residues threonine 889 to proline 900 show a composition bias toward pro residues. Cysteine 973, cysteine 975, cysteine 984, and histidine 985 together coordinate Zn(2+). The span at cysteine 984–glutamate 994 shows a compositional bias: basic and acidic residues.

Belongs to the SecA family. As to quaternary structure, monomer and homodimer. Part of the essential Sec protein translocation apparatus which comprises SecA, SecYEG and auxiliary proteins SecDF. Other proteins may also be involved. The cofactor is Zn(2+).

Its subcellular location is the cell membrane. It localises to the cytoplasm. It carries out the reaction ATP + H2O + cellular proteinSide 1 = ADP + phosphate + cellular proteinSide 2.. Its function is as follows. Part of the Sec protein translocase complex. Interacts with the SecYEG preprotein conducting channel. Has a central role in coupling the hydrolysis of ATP to the transfer of proteins into and across the cell membrane, serving as an ATP-driven molecular motor driving the stepwise translocation of polypeptide chains across the membrane. This Frankia casuarinae (strain DSM 45818 / CECT 9043 / HFP020203 / CcI3) protein is Protein translocase subunit SecA.